The following is a 254-amino-acid chain: Tryptophan synthase alpha chain (254 aa).

Active-site proton acceptor residues include E48 and D59.

Belongs to the TrpA family. Tetramer of two alpha and two beta chains.

The catalysed reaction is (1S,2R)-1-C-(indol-3-yl)glycerol 3-phosphate + L-serine = D-glyceraldehyde 3-phosphate + L-tryptophan + H2O. The protein operates within amino-acid biosynthesis; L-tryptophan biosynthesis; L-tryptophan from chorismate: step 5/5. Functionally, the alpha subunit is responsible for the aldol cleavage of indoleglycerol phosphate to indole and glyceraldehyde 3-phosphate. The polypeptide is Tryptophan synthase alpha chain (Desulfotalea psychrophila (strain LSv54 / DSM 12343)).